Here is a 493-residue protein sequence, read N- to C-terminus: MATSVEADTKSQVNLKVANDGGESASETGVVDVYDDPLIHNSIRKKLDLKLLPLLSAMYLFNAIDRSNLGNAKTDGLEKDLHMKGNEYSITLVLFYVTFCLLDVPANMLLKKFSGKIMLPTLMMGWGSMTLIQCAVHNWGGLIACRLLMGAFEAGFMAGVVYYLTTFYRRNELALRISIFYGAATIAGAFSGLLAYGVFQINHPSIPGWKFLMIIEGSATILLASFAYWHLPSSVLSCKWFTEEEKHVAEQRMLHDGSIQTDEKFALKTALANLLDWKIALYAVIGISYGVASASVGNFLPQMVQRLGFGTVKTNLYTVAPYCVGCVILLAQCTSSDHFRERSTHLAGAMLLTFVGFILLITLDTEAQPGPTYFACFLLAAGAFTPSCIFHSWHNNNTPSENGRAAVTGFMVGASNSGGIISSLAFASKTAPKYIPALIVTATFQGVGIVLVLGFGAWFRWDNRRRDRVQGVRIRTGDVATVSVDDASWRWTA.

A run of 11 helical transmembrane segments spans residues 90–110, 117–137, 147–167, 179–199, 211–231, 279–299, 316–336, 343–363, 370–390, 406–426, and 435–455; these read ITLV…NMLL, IMLP…CAVH, LLMG…LTTF, IFYG…YGVF, FLMI…YWHL, IALY…VGNF, LYTV…CTSS, STHL…LITL, GPTY…SCIF, AVTG…SLAF, and IPAL…VLGF.

The protein belongs to the major facilitator superfamily.

The protein resides in the membrane. Functionally, MFS-type transporter; part of the gene cluster that mediates the biosynthesis of enfumafungin, a glycosylated fernene-type triterpenoid with potent antifungal activity, mediated by its interaction with beta-1,3-glucan synthase and the fungal cell wall. Might facilitate the transport of glucose units to the subcellular site of enfumafungin biosynthesis. The chain is MFS-type transporter efuF from Hormonema carpetanum.